A 271-amino-acid chain; its full sequence is L-aspartate dehydrogenase (271 aa).

Alanine 124 and asparagine 192 together coordinate NAD(+). Residue histidine 222 is part of the active site.

Belongs to the L-aspartate dehydrogenase family.

The enzyme catalyses L-aspartate + NADP(+) + H2O = oxaloacetate + NH4(+) + NADPH + H(+). The catalysed reaction is L-aspartate + NAD(+) + H2O = oxaloacetate + NH4(+) + NADH + H(+). Its pathway is cofactor biosynthesis; NAD(+) biosynthesis; iminoaspartate from L-aspartate (dehydrogenase route): step 1/1. In terms of biological role, specifically catalyzes the NAD or NADP-dependent dehydrogenation of L-aspartate to iminoaspartate. The sequence is that of L-aspartate dehydrogenase from Methanosarcina acetivorans (strain ATCC 35395 / DSM 2834 / JCM 12185 / C2A).